A 203-amino-acid polypeptide reads, in one-letter code: Protein-L-isoaspartate O-methyltransferase (203 aa).

Serine 50 is a catalytic residue.

This sequence belongs to the methyltransferase superfamily. L-isoaspartyl/D-aspartyl protein methyltransferase family.

The protein resides in the cytoplasm. The enzyme catalyses [protein]-L-isoaspartate + S-adenosyl-L-methionine = [protein]-L-isoaspartate alpha-methyl ester + S-adenosyl-L-homocysteine. Its function is as follows. Catalyzes the methyl esterification of L-isoaspartyl residues in peptides and proteins that result from spontaneous decomposition of normal L-aspartyl and L-asparaginyl residues. It plays a role in the repair and/or degradation of damaged proteins. The chain is Protein-L-isoaspartate O-methyltransferase from Methanococcoides burtonii (strain DSM 6242 / NBRC 107633 / OCM 468 / ACE-M).